A 107-amino-acid polypeptide reads, in one-letter code: Metallothionein-1 (107 aa).

The propeptide occupies 1 to 2; it reads MD.

It belongs to the metallothionein superfamily. Type 7 family.

The metallothioneins are involved in the cellular sequestration of toxic metal ions. Binds 12 cadmium ions per molecule. In Tetrahymena pyriformis, this protein is Metallothionein-1.